The chain runs to 1171 residues: ATP-dependent helicase/deoxyribonuclease subunit B (1171 aa).

It belongs to the helicase family. AddB/RexB type 2 subfamily. In terms of assembly, heterodimer of AddA and RexB. Mg(2+) is required as a cofactor.

Its function is as follows. The heterodimer acts as both an ATP-dependent DNA helicase and an ATP-dependent, dual-direction single-stranded exonuclease. Recognizes the chi site generating a DNA molecule suitable for the initiation of homologous recombination. This subunit has 5' -&gt; 3' nuclease activity but not helicase activity. This chain is ATP-dependent helicase/deoxyribonuclease subunit B, found in Leuconostoc citreum (strain KM20).